An 84-amino-acid chain; its full sequence is Putative membrane protein insertion efficiency factor (84 aa).

The segment at 63 to 84 (WGGSGYDPVPGADPEHDRRPRG) is disordered. Residues 75–84 (DPEHDRRPRG) show a composition bias toward basic and acidic residues.

It belongs to the UPF0161 family.

The protein localises to the cell inner membrane. Its function is as follows. Could be involved in insertion of integral membrane proteins into the membrane. The sequence is that of Putative membrane protein insertion efficiency factor from Cereibacter sphaeroides (strain ATCC 17029 / ATH 2.4.9) (Rhodobacter sphaeroides).